Consider the following 1103-residue polypeptide: Coatomer subunit beta (1103 aa).

7 HEAT repeats span residues 51-89, 94-129, 130-166, 247-284, 322-359, 365-404, and 405-441; these read EAYT…CRPD, EEMI…RQFK, VLEP…NFGL, QQKA…APVS, RTME…KNSV, VLKR…RFPE, and AAAS…TCVH.

Oligomeric complex that consists of at least the alpha, beta, beta', gamma, delta, epsilon and zeta subunits.

The protein localises to the cytoplasm. Its subcellular location is the golgi apparatus membrane. The protein resides in the cytoplasmic vesicle. It localises to the COPI-coated vesicle membrane. Its function is as follows. The coatomer is a cytosolic protein complex that binds to dilysine motifs and reversibly associates with Golgi non-clathrin-coated vesicles, which further mediate biosynthetic protein transport from the ER, via the Golgi up to the trans Golgi network. Coatomer complex is required for budding from Golgi membranes, and is essential for the retrograde Golgi-to-ER transport of dilysine-tagged proteins. This Toxoplasma gondii protein is Coatomer subunit beta.